A 440-amino-acid chain; its full sequence is Light-independent protochlorophyllide reductase subunit N (440 aa).

A disordered region spans residues 1–24 (MTCRPALSDSHPPEPGTPSSPSFG). [4Fe-4S] cluster-binding residues include Cys42, Cys67, and Cys128.

The protein belongs to the BchN/ChlN family. In terms of assembly, protochlorophyllide reductase is composed of three subunits; BchL, BchN and BchB. Forms a heterotetramer of two BchB and two BchN subunits. Requires [4Fe-4S] cluster as cofactor.

It catalyses the reaction chlorophyllide a + oxidized 2[4Fe-4S]-[ferredoxin] + 2 ADP + 2 phosphate = protochlorophyllide a + reduced 2[4Fe-4S]-[ferredoxin] + 2 ATP + 2 H2O. It functions in the pathway porphyrin-containing compound metabolism; bacteriochlorophyll biosynthesis (light-independent). Component of the dark-operative protochlorophyllide reductase (DPOR) that uses Mg-ATP and reduced ferredoxin to reduce ring D of protochlorophyllide (Pchlide) to form chlorophyllide a (Chlide). This reaction is light-independent. The NB-protein (BchN-BchB) is the catalytic component of the complex. This Rhodospirillum rubrum (strain ATCC 11170 / ATH 1.1.1 / DSM 467 / LMG 4362 / NCIMB 8255 / S1) protein is Light-independent protochlorophyllide reductase subunit N.